The chain runs to 427 residues: 3-phosphoshikimate 1-carboxyvinyltransferase (427 aa).

3-phosphoshikimate is bound by residues K22, S23, and R27. K22 contributes to the phosphoenolpyruvate binding site. 2 residues coordinate phosphoenolpyruvate: G96 and R124. Residues S169, S170, Q171, S197, D313, N336, and K340 each coordinate 3-phosphoshikimate. Q171 is a phosphoenolpyruvate binding site. Catalysis depends on D313, which acts as the Proton acceptor. Phosphoenolpyruvate is bound by residues R344, R386, and K411.

It belongs to the EPSP synthase family. Monomer.

The protein resides in the cytoplasm. It carries out the reaction 3-phosphoshikimate + phosphoenolpyruvate = 5-O-(1-carboxyvinyl)-3-phosphoshikimate + phosphate. Its pathway is metabolic intermediate biosynthesis; chorismate biosynthesis; chorismate from D-erythrose 4-phosphate and phosphoenolpyruvate: step 6/7. Catalyzes the transfer of the enolpyruvyl moiety of phosphoenolpyruvate (PEP) to the 5-hydroxyl of shikimate-3-phosphate (S3P) to produce enolpyruvyl shikimate-3-phosphate and inorganic phosphate. The chain is 3-phosphoshikimate 1-carboxyvinyltransferase from Citrobacter koseri (strain ATCC BAA-895 / CDC 4225-83 / SGSC4696).